Consider the following 309-residue polypeptide: Probable 2,4-dienoyl-CoA reductase decr-1.2 [(3E)-enoyl-CoA-producing] (309 aa).

NADP(+)-binding positions include 28–60, 32–37, arginine 57, and aspartate 83; these read VLVTGGGTGIGKAIATTFAHLRATVVIAARRME and GGGTGI. Arginine 57 provides a ligand contact to substrate. Substrate contacts are provided by phenylalanine 116 and serine 124. Tyrosine 166 functions as the Proton acceptor in the catalytic mechanism. NADP(+)-binding positions include lysine 181 and 207–210; that span reads PGPI. Arginine 218 contributes to the substrate binding site.

It belongs to the short-chain dehydrogenases/reductases (SDR) family. 2,4-dienoyl-CoA reductase subfamily.

The catalysed reaction is a (2E,4E)-dienoyl-CoA + NADPH + H(+) = a 4,5-saturated-(3E)-enoyl-CoA + NADP(+). It catalyses the reaction a (2E,4Z)-dienoyl-CoA + NADPH + H(+) = a 4,5-saturated-(3E)-enoyl-CoA + NADP(+). Its function is as follows. Auxiliary enzyme of beta-oxidation. It participates in the metabolism of unsaturated fatty enoyl-CoA esters having double bonds in both even- and odd-numbered positions. Catalyzes the NADP-dependent reduction of 2,4-dienoyl-CoA to yield trans-3-enoyl-CoA. This chain is Probable 2,4-dienoyl-CoA reductase decr-1.2 [(3E)-enoyl-CoA-producing], found in Caenorhabditis elegans.